A 487-amino-acid polypeptide reads, in one-letter code: Glutamyl-tRNA(Gln) amidotransferase subunit A (487 aa).

Residues lysine 80 and serine 155 each act as charge relay system in the active site. Serine 179 serves as the catalytic Acyl-ester intermediate.

It belongs to the amidase family. GatA subfamily. In terms of assembly, heterotrimer of A, B and C subunits.

It carries out the reaction L-glutamyl-tRNA(Gln) + L-glutamine + ATP + H2O = L-glutaminyl-tRNA(Gln) + L-glutamate + ADP + phosphate + H(+). Its function is as follows. Allows the formation of correctly charged Gln-tRNA(Gln) through the transamidation of misacylated Glu-tRNA(Gln) in organisms which lack glutaminyl-tRNA synthetase. The reaction takes place in the presence of glutamine and ATP through an activated gamma-phospho-Glu-tRNA(Gln). This chain is Glutamyl-tRNA(Gln) amidotransferase subunit A, found in Chloroflexus aurantiacus (strain ATCC 29366 / DSM 635 / J-10-fl).